The following is a 1341-amino-acid chain: Subtilisin-like protease 2 (1341 aa).

Residues 1-18 (MLNIIYVVSLILIKFIFY) form the signal peptide. A propeptide spans 19-686 (KECNNNNNYY…KLYNNKYSFL (668 aa)) (inhibition peptide). Disordered stretches follow at residues 85 to 107 (EKKT…EKKK) and 143 to 171 (ADVS…NYKN). Residues asparagine 165, asparagine 343, asparagine 449, asparagine 453, and asparagine 492 are each glycosylated (N-linked (GlcNAc...) asparagine). The disordered stretch occupies residues 415-474 (KKSKKEKENTQQKGGNNPNVDINILNNNNNNNNNNNSNNNSNSMNDEEINYNNNNNNKES). The span at 430-474 (NNPNVDINILNNNNNNNNNNNSNNNSNSMNDEEINYNNNNNNKES) shows a compositional bias: low complexity. The interval 499-530 (IYHNKNDNSYKNKKEGTGKNNDNNDPNNNNNK) is disordered. Basic and acidic residues predominate over residues 502-515 (NKNDNSYKNKKEGT). The span at 517 to 530 (KNNDNNDPNNNNNK) shows a compositional bias: low complexity. N-linked (GlcNAc...) asparagine glycosylation is found at asparagine 550, asparagine 641, and asparagine 728. The Extracellular portion of the chain corresponds to 687 to 1136 (NKFLNIEPLI…LYNLYEYDSH (450 aa)). The 294-residue stretch at 726–1019 (TWNLSIIRVF…DSLVNAEGAV (294 aa)) folds into the Peptidase S8 domain. Catalysis depends on charge relay system residues aspartate 754 and histidine 797. N-linked (GlcNAc...) asparagine glycosylation is found at asparagine 820, asparagine 856, asparagine 892, and asparagine 950. Serine 960 (charge relay system) is an active-site residue. Residues asparagine 1009 and asparagine 1105 are each glycosylated (N-linked (GlcNAc...) asparagine). The chain crosses the membrane as a helical span at residues 1137–1157 (YLLASVILFFLALLSIFVGMI). Over 1158 to 1341 (YMKSRKHSDK…MNQLDDMFMK (184 aa)) the chain is Cytoplasmic.

The protein belongs to the peptidase S8 family. In terms of processing, proteolytically cleaved at the N-terminus to generate a 74kDa intermediate which is further processed into a 72kDa form. The first maturation cleavage is autocatalytic, occurs in the ER and is necessary for the subsequent SUB2 trafficking to the microneme. The second cleavage may be mediated by PMX/plasmepsin X.

It localises to the cell membrane. The protein localises to the cytoplasmic vesicle. Its subcellular location is the secretory vesicle. The protein resides in the microneme membrane. It catalyses the reaction Hydrolysis of proteins with broad specificity for peptide bonds, and a preference for a large uncharged residue in P1. Hydrolyzes peptide amides.. Activation may be calcium-dependent. Inhibited by the non-covalent interaction with the cleaved propeptide. Its function is as follows. Serine protease which plays an essential role in the shedding of AMA1, MSP1 and MSP7 from the surface of the invading merozoite; this step is essential for productive invasion and the release of the adhesion between the erythrocyte and the merozoite. May cleave TRAMP/PTTRAMP, thereby shedding TRAMP from the merozoite surface during erythrocyte invasion. The sequence is that of Subtilisin-like protease 2 from Plasmodium falciparum (isolate 3D7).